A 643-amino-acid polypeptide reads, in one-letter code: Phosphatidylinositol-3,5-bisphosphate 3-phosphatase MTMR2 (643 aa).

Composition is skewed to polar residues over residues 1–12 (MEKSSSCESLGS) and 23–40 (DSLS…VHTK). The disordered stretch occupies residues 1 to 54 (MEKSSSCESLGSQPAVARPPSVDSLSSASTSHSENSVHTKSASVVSSDSISTSA). 2 positions are modified to phosphoserine: S6 and S9. Residues 41–54 (SASVVSSDSISTSA) show a composition bias toward low complexity. S58 carries the phosphoserine modification. In terms of domain architecture, GRAM spans 68–139 (NKLAEMEEPP…GVISRVEKIG (72 aa)). In terms of domain architecture, Myotubularin phosphatase spans 205 to 580 (GWKLYDSLSE…RHLELWVGYY (376 aa)). Residues N330, N355, and I356 each coordinate a 1,2-diacyl-sn-glycero-3-phospho-(1D-myo-inositol-3,5-bisphosphate). Positions 330, 355, and 356 each coordinate a 1,2-diacyl-sn-glycero-3-phospho-(1D-myo-inositol-3-phosphate). C417 acts as the Phosphocysteine intermediate in catalysis. A 1,2-diacyl-sn-glycero-3-phospho-(1D-myo-inositol-3,5-bisphosphate) is bound by residues S418, D419, G420, W421, D422, R423, R459, and R463. The a 1,2-diacyl-sn-glycero-3-phospho-(1D-myo-inositol-3-phosphate) site is built by S418, D419, G420, W421, D422, and R423. Residue R463 coordinates a 1,2-diacyl-sn-glycero-3-phospho-(1D-myo-inositol-3-phosphate). A coiled-coil region spans residues 593–627 (IHNRYKELLAKRAELQKKVEELQREISNRSTSSSE). Residues 614 to 643 (LQREISNRSTSSSERAGSPAQCVTPVQTVV) form a disordered region.

This sequence belongs to the protein-tyrosine phosphatase family. Non-receptor class myotubularin subfamily. Homodimer (via coiled-coil domain). Heterotetramer consisting of one MTMR2 dimer and one SBF2/MTMR13 dimer; specifically in peripheral nerves stabilizes SBF2/MTMR13 at the membranes and increases MTMR2 catalytic activity towards phosphatidylinositol 3,5-bisphosphate and to a lesser extent towards phosphatidylinositol 3-phosphate. Heterodimer with SBF1/MTMR5; acts as an adapter for the phosphatase MTMR2 to regulate MTMR2 catalytic activity and subcellular location. Heterodimer with MTMR12. Post-translationally, phosphorylation at Ser-58 decreases MTMR2 localization to endocytic vesicular structures.

The protein resides in the cytoplasm. It is found in the early endosome membrane. It localises to the perinuclear region. The protein localises to the cell projection. Its subcellular location is the axon. The protein resides in the endosome membrane. It carries out the reaction a 1,2-diacyl-sn-glycero-3-phospho-(1D-myo-inositol-3,5-bisphosphate) + H2O = a 1,2-diacyl-sn-glycero-3-phospho-(1D-myo-inositol-5-phosphate) + phosphate. It catalyses the reaction a 1,2-diacyl-sn-glycero-3-phospho-(1D-myo-inositol-3-phosphate) + H2O = a 1,2-diacyl-sn-glycero-3-phospho-(1D-myo-inositol) + phosphate. The catalysed reaction is 1,2-dioctanoyl-sn-glycero-3-phospho-(1-D-myo-inositol-3-phosphate) + H2O = 1,2-dioctanoyl-sn-glycero-3-phospho-(1D-myo-inositol) + phosphate. The enzyme catalyses 1,2-dioctanoyl-sn-glycero-3-phospho-(1D-myo-inositol-3,5-bisphosphate) + H2O = 1,2-dioctanoyl-sn-glycero-3-phospho-(1D-myo-inositol-5-phosphate) + phosphate. Functionally, lipid phosphatase that specifically dephosphorylates the D-3 position of phosphatidylinositol 3-phosphate and phosphatidylinositol 3,5-bisphosphate, generating phosphatidylinositol and phosphatidylinositol 5-phosphate. Regulates the level of these phosphoinositides critical for various biological processes including autophagy initiation and autophagosome maturation. The protein is Phosphatidylinositol-3,5-bisphosphate 3-phosphatase MTMR2 of Bos taurus (Bovine).